The chain runs to 156 residues: Small ribosomal subunit protein uS7 (156 aa).

It belongs to the universal ribosomal protein uS7 family. In terms of assembly, part of the 30S ribosomal subunit. Contacts proteins S9 and S11.

Functionally, one of the primary rRNA binding proteins, it binds directly to 16S rRNA where it nucleates assembly of the head domain of the 30S subunit. Is located at the subunit interface close to the decoding center, probably blocks exit of the E-site tRNA. The chain is Small ribosomal subunit protein uS7 from Geobacter sulfurreducens (strain ATCC 51573 / DSM 12127 / PCA).